The chain runs to 267 residues: Tryptophan synthase alpha chain (267 aa).

Catalysis depends on proton acceptor residues glutamate 49 and aspartate 60.

Belongs to the TrpA family. Tetramer of two alpha and two beta chains.

It catalyses the reaction (1S,2R)-1-C-(indol-3-yl)glycerol 3-phosphate + L-serine = D-glyceraldehyde 3-phosphate + L-tryptophan + H2O. It participates in amino-acid biosynthesis; L-tryptophan biosynthesis; L-tryptophan from chorismate: step 5/5. The alpha subunit is responsible for the aldol cleavage of indoleglycerol phosphate to indole and glyceraldehyde 3-phosphate. The polypeptide is Tryptophan synthase alpha chain (Methylococcus capsulatus (strain ATCC 33009 / NCIMB 11132 / Bath)).